We begin with the raw amino-acid sequence, 54 residues long: Chymosin (54 aa).

Positions 1 to 27 are cleaved as a propeptide — activation peptide; that stretch reads SEITRVPLHKGKSLRKALKEHGLLEBF.

Belongs to the peptidase A1 family. As to quaternary structure, monomer.

The enzyme catalyses Broad specificity similar to that of pepsin A. Clots milk by cleavage of a single 104-Ser-Phe-|-Met-Ala-107 bond in kappa-chain of casein.. Its function is as follows. Chymosin is synthesized in the mucosa of the stomach. The enzyme hydrolyzes casein to paracasein. This Felis catus (Cat) protein is Chymosin (CYM).